Here is a 616-residue protein sequence, read N- to C-terminus: Dihydroxy-acid dehydratase (616 aa).

D81 contacts Mg(2+). C122 provides a ligand contact to [2Fe-2S] cluster. Residues D123 and K124 each contribute to the Mg(2+) site. K124 is modified (N6-carboxylysine). Residue C195 participates in [2Fe-2S] cluster binding. Mg(2+) is bound at residue E491. The active-site Proton acceptor is the S517.

Belongs to the IlvD/Edd family. In terms of assembly, homodimer. [2Fe-2S] cluster serves as cofactor. It depends on Mg(2+) as a cofactor.

It carries out the reaction (2R)-2,3-dihydroxy-3-methylbutanoate = 3-methyl-2-oxobutanoate + H2O. The catalysed reaction is (2R,3R)-2,3-dihydroxy-3-methylpentanoate = (S)-3-methyl-2-oxopentanoate + H2O. It functions in the pathway amino-acid biosynthesis; L-isoleucine biosynthesis; L-isoleucine from 2-oxobutanoate: step 3/4. The protein operates within amino-acid biosynthesis; L-valine biosynthesis; L-valine from pyruvate: step 3/4. Functions in the biosynthesis of branched-chain amino acids. Catalyzes the dehydration of (2R,3R)-2,3-dihydroxy-3-methylpentanoate (2,3-dihydroxy-3-methylvalerate) into 2-oxo-3-methylpentanoate (2-oxo-3-methylvalerate) and of (2R)-2,3-dihydroxy-3-methylbutanoate (2,3-dihydroxyisovalerate) into 2-oxo-3-methylbutanoate (2-oxoisovalerate), the penultimate precursor to L-isoleucine and L-valine, respectively. In Escherichia fergusonii (strain ATCC 35469 / DSM 13698 / CCUG 18766 / IAM 14443 / JCM 21226 / LMG 7866 / NBRC 102419 / NCTC 12128 / CDC 0568-73), this protein is Dihydroxy-acid dehydratase.